Here is a 465-residue protein sequence, read N- to C-terminus: DEAD-box ATP-dependent RNA helicase 55 (465 aa).

Positions 17–45 match the Q motif motif; sequence FSELKPPLSEDIIEALDRSGFEVCTPVQA. Residues 48-219 form the Helicase ATP-binding domain; that stretch reads IPFLCSHKDV…KAGLRNPYLK (172 aa). 61–68 is an ATP binding site; sequence AATGSGKT. The DEAD box signature appears at 167–170; it reads DEAD. Residues 228 to 422 form the Helicase C-terminal domain; it reads QLVHLLIENK…KDKLQQEKRG (195 aa). Residues 413–465 are disordered; sequence KDKLQQEKRGKRKKSSKEAVDDSNKASRKRKLTGRQRQTIQTAQDEEEMNLRL. The segment covering 428 to 437 has biased composition (basic and acidic residues); that stretch reads SKEAVDDSNK. The segment covering 456 to 465 has biased composition (acidic residues); the sequence is QDEEEMNLRL.

Belongs to the DEAD box helicase family. DDX55/SPB4 subfamily.

It carries out the reaction ATP + H2O = ADP + phosphate + H(+). In Arabidopsis thaliana (Mouse-ear cress), this protein is DEAD-box ATP-dependent RNA helicase 55 (RH55).